The primary structure comprises 926 residues: Protein translocase subunit SecA (926 aa).

ATP contacts are provided by residues Gln-87, 105 to 109, and Asp-512; that span reads GEGKT. Zn(2+)-binding residues include Cys-911, Cys-913, Cys-922, and His-923.

It belongs to the SecA family. In terms of assembly, monomer and homodimer. Part of the essential Sec protein translocation apparatus which comprises SecA, SecYEG and auxiliary proteins SecDF-YajC and YidC. It depends on Zn(2+) as a cofactor.

Its subcellular location is the cell inner membrane. It is found in the cytoplasm. The enzyme catalyses ATP + H2O + cellular proteinSide 1 = ADP + phosphate + cellular proteinSide 2.. Functionally, part of the Sec protein translocase complex. Interacts with the SecYEG preprotein conducting channel. Has a central role in coupling the hydrolysis of ATP to the transfer of proteins into and across the cell membrane, serving both as a receptor for the preprotein-SecB complex and as an ATP-driven molecular motor driving the stepwise translocation of polypeptide chains across the membrane. This chain is Protein translocase subunit SecA, found in Psychrobacter cryohalolentis (strain ATCC BAA-1226 / DSM 17306 / VKM B-2378 / K5).